A 331-amino-acid polypeptide reads, in one-letter code: Aldo-keto reductase family 7 member A3 (331 aa).

Ser6 carries the post-translational modification Phosphoserine. Met17, Asp44, and Tyr49 together coordinate NADPH. Tyr49 acts as the Proton donor in catalysis. Ser85 bears the Phosphoserine mark. Positions 113, 143, 144, 198, 200, 202, 208, 209, and 222 each coordinate NADPH. Thr227 carries the phosphothreonine modification. Positions 290, 294, and 298 each coordinate NADPH.

It belongs to the aldo/keto reductase family. Aldo/keto reductase 2 subfamily. As to quaternary structure, homodimer. As to expression, expressed in colon, kidney, liver, pancreas, adenocarcinoma and endometrium.

It is found in the cytoplasm. The catalysed reaction is a primary alcohol + NADP(+) = an aldehyde + NADPH + H(+). The enzyme catalyses aflatoxin B1 dialdehyde + NADPH + H(+) = aflatoxin B1 C(6a)-monoaldehyde + NADP(+). It carries out the reaction aflatoxin B1 dialdehyde + NADPH + H(+) = aflatoxin B1 C(8)-monoaldehyde + NADP(+). It catalyses the reaction aflatoxin B1 C(6a)-monoaldehyde + NADPH + 2 H(+) = aflatoxin B1 triol + NADP(+). Its activity is regulated as follows. Inhibited by citrate. In terms of biological role, catalyzes the NADPH-dependent reduction of various carbonyl-containing compounds, including aldehydes, ketones, and toxic products from cellular metabolism or environmental exposure. Can reduce the dialdehyde form of aflatoxin B1 (AFB1) into alcohol derivatives, via monoaldehydes intermediates. Can reduce the dialdehyde form of aflatoxin B1 (AFB1) into alcohol derivatives, via monoaldehydes intermediates, thus preventing the formation of protein adducts that contribute to AFB1-induced toxicity. The polypeptide is Aldo-keto reductase family 7 member A3 (Homo sapiens (Human)).